The sequence spans 203 residues: Urease accessory protein UreE (203 aa).

The segment at 170–203 is disordered; the sequence is EHHGHSHSHSHSHSHDHDHQHGPSCSHGHHHGHR.

Belongs to the UreE family.

Its subcellular location is the cytoplasm. Functionally, involved in urease metallocenter assembly. Binds nickel. Probably functions as a nickel donor during metallocenter assembly. The protein is Urease accessory protein UreE of Burkholderia mallei (strain SAVP1).